The chain runs to 745 residues: Copper-exporting P-type ATPase B (745 aa).

A disordered region spans residues 1–76; that stretch reads MNNGIDPENE…GMDHSHMDHE (76 aa). Residues 1 to 108 lie on the Cytoplasmic side of the membrane; sequence MNNGIDPENE…HMGNFKQKFW (108 aa). A compositionally biased stretch (basic and acidic residues) spans 36–76; sequence LQEHGKMENMDQHHTHGHMERHQQMDHGHMSGMDHSHMDHE. Tandem repeats lie at residues 60–71, 73–84, and 86–97. The 3 X 12 AA approximate repeats stretch occupies residues 60-97; the sequence is MDHGHMSGMDHSHMDHEDMSGMNHSHMGHENMSGMDHS. A helical membrane pass occupies residues 109-128; it reads LSLILAIPIILFSPMMGMSF. Residues 129-139 are Extracellular-facing; the sequence is PFQVTFPGSNW. A helical transmembrane segment spans residues 140–160; the sequence is VVLVLATILFIYGGQPFLSGA. The Cytoplasmic portion of the chain corresponds to 161-170; that stretch reads KMELKQKSPA. Residues 171–191 form a helical membrane-spanning segment; it reads MMTLIAMGITVAYVYSVYSFI. The Extracellular segment spans residues 192 to 200; the sequence is ANLINPHTH. A helical membrane pass occupies residues 201 to 217; that stretch reads VMDFFWELATLIVIMLL. Topologically, residues 218-359 are cytoplasmic; sequence GHWIEMNAVS…EFLSDKVAKW (142 aa). A helical transmembrane segment spans residues 360 to 379; the sequence is LFYVALVVGIIAFIAWLFLA. The Extracellular portion of the chain corresponds to 380–388; it reads NLPDALERM. Residues 389-409 form a helical membrane-spanning segment; the sequence is VTVFIIACPHALGLAIPLVVA. Residues 410 to 703 are Cytoplasmic-facing; it reads RSTSIAAKNG…QNLWWGAGYN (294 aa). Asp-440 (4-aspartylphosphate intermediate) is an active-site residue. Residues Asp-638 and Asp-642 each contribute to the Mg(2+) site. The chain crosses the membrane as a helical span at residues 704 to 721; it reads IIAIPLAAGILAPIGLIL. At 722-723 the chain is on the extracellular side; sequence SP. The helical transmembrane segment at 724–744 threads the bilayer; the sequence is AVGAVLMSLSTVVVALNALTL. Lys-745 is a topological domain (cytoplasmic).

The protein belongs to the cation transport ATPase (P-type) (TC 3.A.3) family. Type IB subfamily. As to quaternary structure, monomer.

It is found in the cell membrane. The enzyme catalyses Cu(+)(in) + ATP + H2O = Cu(+)(out) + ADP + phosphate + H(+). With respect to regulation, inhibited by vanadate. In terms of biological role, involved in copper export. Can also export silver. The protein is Copper-exporting P-type ATPase B (copB) of Enterococcus hirae (strain ATCC 9790 / DSM 20160 / JCM 8729 / LMG 6399 / NBRC 3181 / NCIMB 6459 / NCDO 1258 / NCTC 12367 / WDCM 00089 / R).